A 253-amino-acid chain; its full sequence is Tryptophan synthase alpha chain (253 aa).

Catalysis depends on proton acceptor residues Glu-47 and Asp-58.

Belongs to the TrpA family. Tetramer of two alpha and two beta chains.

It catalyses the reaction (1S,2R)-1-C-(indol-3-yl)glycerol 3-phosphate + L-serine = D-glyceraldehyde 3-phosphate + L-tryptophan + H2O. The protein operates within amino-acid biosynthesis; L-tryptophan biosynthesis; L-tryptophan from chorismate: step 5/5. Its function is as follows. The alpha subunit is responsible for the aldol cleavage of indoleglycerol phosphate to indole and glyceraldehyde 3-phosphate. This chain is Tryptophan synthase alpha chain, found in Lactococcus lactis subsp. cremoris (strain MG1363).